Here is a 525-residue protein sequence, read N- to C-terminus: GMP synthase [glutamine-hydrolyzing] (525 aa).

The Glutamine amidotransferase type-1 domain occupies 8–206; the sequence is PLLILDFGSQ…VVDICKASTD (199 aa). Cys-85 acts as the Nucleophile in catalysis. Active-site residues include His-180 and Glu-182. The region spanning 207–400 is the GMPS ATP-PPase domain; the sequence is WTPEHIIDEA…LGLPHDMVYR (194 aa). 234–240 is a binding site for ATP; sequence SGGVDSS.

Homodimer.

The catalysed reaction is XMP + L-glutamine + ATP + H2O = GMP + L-glutamate + AMP + diphosphate + 2 H(+). It participates in purine metabolism; GMP biosynthesis; GMP from XMP (L-Gln route): step 1/1. In terms of biological role, catalyzes the synthesis of GMP from XMP. This is GMP synthase [glutamine-hydrolyzing] from Legionella pneumophila (strain Paris).